The sequence spans 401 residues: Large ribosomal subunit protein uL3 (401 aa).

Residues 1–22 (MSHRKFSAPRHGHMGFTPKKRS) form a disordered region.

This sequence belongs to the universal ribosomal protein uL3 family.

Its subcellular location is the cytoplasm. The L3 protein is a component of the large subunit of cytoplasmic ribosomes. This is Large ribosomal subunit protein uL3 (rpl-3) from Caenorhabditis elegans.